The sequence spans 437 residues: Septin-7 (437 aa).

N-acetylserine is present on S2. Y30 is subject to Phosphotyrosine. Residues 47 to 316 (RGFEFTLMVV…ENYRSRKLAA (270 aa)) enclose the Septin-type G domain. The tract at residues 47–317 (RGFEFTLMVV…NYRSRKLAAV (271 aa)) is interaction with SEPTIN12. A G1 motif region spans residues 57-64 (GESGLGKS). Residue 57–64 (GESGLGKS) participates in GTP binding. Phosphoserine is present on S77. GTP is bound by residues T90, G116, and 195–203 (KADTLTPEE). The G3 motif stretch occupies residues 113–116 (DTPG). Positions 194–197 (AKAD) are G4 motif. Position 228 is a phosphothreonine (T228). Positions 250 and 265 each coordinate GTP. Residues 332 to 433 (TKSPLAQMEE…SRTLEKNKKK (102 aa)) are a coiled coil. S334 is modified (phosphoserine). An N6-acetyllysine modification is found at K373. Residues 378 to 410 (ELQRRHEQMKKNLEAQHKELEEKRRQFEDEKAN) are compositionally biased toward basic and acidic residues. The disordered stretch occupies residues 378–437 (ELQRRHEQMKKNLEAQHKELEEKRRQFEDEKANWEAQQRILEQQNSSRTLEKNKKKGKIF). S424 carries the phosphoserine modification. T426 bears the Phosphothreonine mark.

It belongs to the TRAFAC class TrmE-Era-EngA-EngB-Septin-like GTPase superfamily. Septin GTPase family. Septins polymerize into heterooligomeric protein complexes that form filaments, and associate with cellular membranes, actin filaments and microtubules. GTPase activity is required for filament formation. Filaments are assembled from asymmetrical heterotrimers, composed of SEPTIN2, SEPTIN6 and SEPTIN7 that associate head-to-head to form a hexameric unit. Within the trimer, directly interacts with SEPTIN6, while interaction with SEPTIN2 seems indirect. In the absence of SEPTIN6, forms homodimers. Interacts directly with CENPE and links CENPE to septin filaments composed of SEPTIN2, SEPTIN6 and SEPTIN7. Interacts with SEPTIN5, SEPTIN8, SEPTIN9 and SEPTIN11. Component of a septin core octameric complex consisting of SEPTIN12, SEPTIN7, SEPTIN6 and SEPTIN2 or SEPTIN4 in the order 12-7-6-2-2-6-7-12 or 12-7-6-4-4-6-7-12 and located in the sperm annulus; the SEPTIN12:SEPTIN7 association is mediated by the respective GTP-binding domains.

Its subcellular location is the cytoplasm. It is found in the chromosome. The protein localises to the centromere. The protein resides in the kinetochore. It localises to the cytoskeleton. Its subcellular location is the spindle. It is found in the cleavage furrow. The protein localises to the midbody. The protein resides in the cilium axoneme. It localises to the cell projection. Its subcellular location is the cilium. It is found in the flagellum. Functionally, filament-forming cytoskeletal GTPase. Required for normal organization of the actin cytoskeleton. Required for normal progress through mitosis. Involved in cytokinesis. Required for normal association of CENPE with the kinetochore. Plays a role in ciliogenesis and collective cell movements. Forms a filamentous structure with SEPTIN12, SEPTIN6, SEPTIN2 and probably SEPTIN4 at the sperm annulus which is required for the structural integrity and motility of the sperm tail during postmeiotic differentiation. This Bos taurus (Bovine) protein is Septin-7.